The primary structure comprises 133 residues: uncharacterized protein (133 aa).

This is an uncharacterized protein from Caenorhabditis elegans.